A 345-amino-acid chain; its full sequence is Phenylalanine--tRNA ligase alpha subunit (345 aa).

Mg(2+) is bound at residue Glu-272.

Belongs to the class-II aminoacyl-tRNA synthetase family. Phe-tRNA synthetase alpha subunit type 1 subfamily. As to quaternary structure, tetramer of two alpha and two beta subunits. The cofactor is Mg(2+).

Its subcellular location is the cytoplasm. It carries out the reaction tRNA(Phe) + L-phenylalanine + ATP = L-phenylalanyl-tRNA(Phe) + AMP + diphosphate + H(+). The sequence is that of Phenylalanine--tRNA ligase alpha subunit from Prochlorococcus marinus (strain MIT 9312).